The primary structure comprises 48 residues: Sperm protamine P1 (48 aa).

Belongs to the protamine P1 family. In terms of tissue distribution, testis.

It is found in the nucleus. The protein localises to the chromosome. Its function is as follows. Protamines substitute for histones in the chromatin of sperm during the haploid phase of spermatogenesis. They compact sperm DNA into a highly condensed, stable and inactive complex. In Eptesicus fuscus (Big brown bat), this protein is Sperm protamine P1 (PRM1).